The primary structure comprises 491 residues: Nicotinamide phosphoribosyltransferase (491 aa).

The residue at position 1 (Met1) is an N-acetylmethionine. Tyr188 carries the post-translational modification Phosphotyrosine. Diphosphate is bound at residue Arg196. Residue Asp219 participates in beta-nicotinamide D-ribonucleotide binding. Residues His247 and Arg311 each contribute to the diphosphate site. Residues 311 to 313, 353 to 354, Gly384, and Arg392 each bind beta-nicotinamide D-ribonucleotide; these read RPD and GD. Ser472 bears the Phosphoserine mark.

The protein belongs to the NAPRTase family. In terms of assembly, homodimer. In terms of tissue distribution, expressed in various tissues. At the highest level in liver and at the second highest in heart. The amount is higher in heart than in lung.

It is found in the nucleus. It localises to the cytoplasm. The protein resides in the secreted. The catalysed reaction is beta-nicotinamide D-ribonucleotide + diphosphate = 5-phospho-alpha-D-ribose 1-diphosphate + nicotinamide + H(+). The protein operates within cofactor biosynthesis; NAD(+) biosynthesis; nicotinamide D-ribonucleotide from 5-phospho-alpha-D-ribose 1-diphosphate and nicotinamide: step 1/1. Functionally, catalyzes the condensation of nicotinamide with 5-phosphoribosyl-1-pyrophosphate to yield nicotinamide mononucleotide, an intermediate in the biosynthesis of NAD. It is the rate limiting component in the mammalian NAD biosynthesis pathway. The secreted form behaves both as a cytokine with immunomodulating properties and an adipokine with anti-diabetic properties, it has no enzymatic activity, partly because of lack of activation by ATP, which has a low level in extracellular space and plasma. Plays a role in the modulation of circadian clock function. NAMPT-dependent oscillatory production of NAD regulates oscillation of clock target gene expression by releasing the core clock component: CLOCK-BMAL1 heterodimer from NAD-dependent SIRT1-mediated suppression. The sequence is that of Nicotinamide phosphoribosyltransferase (Nampt) from Rattus norvegicus (Rat).